A 125-amino-acid chain; its full sequence is Large ribosomal subunit protein uL22 (125 aa).

Belongs to the universal ribosomal protein uL22 family. Part of the 50S ribosomal subunit.

Functionally, this protein binds specifically to 23S rRNA; its binding is stimulated by other ribosomal proteins, e.g. L4, L17, and L20. It is important during the early stages of 50S assembly. It makes multiple contacts with different domains of the 23S rRNA in the assembled 50S subunit and ribosome. The globular domain of the protein is located near the polypeptide exit tunnel on the outside of the subunit, while an extended beta-hairpin is found that lines the wall of the exit tunnel in the center of the 70S ribosome. In Acetivibrio thermocellus (strain ATCC 27405 / DSM 1237 / JCM 9322 / NBRC 103400 / NCIMB 10682 / NRRL B-4536 / VPI 7372) (Clostridium thermocellum), this protein is Large ribosomal subunit protein uL22.